A 180-amino-acid polypeptide reads, in one-letter code: NAD(P)H-quinone oxidoreductase subunit I, chloroplastic (180 aa).

4Fe-4S ferredoxin-type domains lie at 55–84 (GRIH…VDWR) and 95–124 (LNYS…MTEE). [4Fe-4S] cluster-binding residues include cysteine 64, cysteine 67, cysteine 70, cysteine 74, cysteine 104, cysteine 107, cysteine 110, and cysteine 114.

The protein belongs to the complex I 23 kDa subunit family. NDH is composed of at least 16 different subunits, 5 of which are encoded in the nucleus. The cofactor is [4Fe-4S] cluster.

The protein resides in the plastid. Its subcellular location is the chloroplast thylakoid membrane. The enzyme catalyses a plastoquinone + NADH + (n+1) H(+)(in) = a plastoquinol + NAD(+) + n H(+)(out). It carries out the reaction a plastoquinone + NADPH + (n+1) H(+)(in) = a plastoquinol + NADP(+) + n H(+)(out). In terms of biological role, NDH shuttles electrons from NAD(P)H:plastoquinone, via FMN and iron-sulfur (Fe-S) centers, to quinones in the photosynthetic chain and possibly in a chloroplast respiratory chain. The immediate electron acceptor for the enzyme in this species is believed to be plastoquinone. Couples the redox reaction to proton translocation, and thus conserves the redox energy in a proton gradient. This is NAD(P)H-quinone oxidoreductase subunit I, chloroplastic from Agrostis stolonifera (Creeping bentgrass).